The primary structure comprises 1071 residues: DNA-directed RNA polymerase subunit beta (1071 aa).

The protein belongs to the RNA polymerase beta chain family. As to quaternary structure, in plastids the minimal PEP RNA polymerase catalytic core is composed of four subunits: alpha, beta, beta', and beta''. When a (nuclear-encoded) sigma factor is associated with the core the holoenzyme is formed, which can initiate transcription.

It is found in the plastid. Its subcellular location is the chloroplast. The catalysed reaction is RNA(n) + a ribonucleoside 5'-triphosphate = RNA(n+1) + diphosphate. DNA-dependent RNA polymerase catalyzes the transcription of DNA into RNA using the four ribonucleoside triphosphates as substrates. The sequence is that of DNA-directed RNA polymerase subunit beta from Adiantum capillus-veneris (Maidenhair fern).